A 555-amino-acid polypeptide reads, in one-letter code: MADSTSLINKRTKGGWNAALFIIVVEIAERFAFYGLASNLITFLTNELGQSTATAAKNINTWIGVSCMFPILGAFLADSILGRFKTVLLTSFIYLLGIVMLPLSVTVVARRMREKVFFMALYVMAVGEGGHKPCVMTFAADQFGEANAEEKAAKTSFFNYWYMAIVLASSIAVLALIFIQERVSWSLGFSIIAGSVVIAIVIFLIGIPKYRKQVPVGSPFTRVAQVMVAALKKWRLSSTRHHYGLCYEEEDEHKLESTNSNQVYLLARTNQFRFLDKATIIDEIDHNKNRNPWRLCTVNQVEEVKLILRLIPIWISLIMFCATLTQLNTFFLKQGSMMDRTIGNHFTIPPAAFQSIVGVTILILIPLYDRVFVPMVRKITNHHSGITSLQRIGVGLFVATFNMVICGLVEAKRLKVARDHGLIDSPKEVVPMSSLWLLPQYILVGIGDVFTIVGMQELFYDQMPETMRSIGAAIFISVVGVGSFVSTGIISTVQTISKSHGEEWLVNNLNRAHLDYYYWIIASLNAVSLCFYLFIANHFLYKKLQDKDDDVESER.

The next 2 helical transmembrane spans lie at Ala-18–Ser-38 and Trp-62–Gly-82. Thr-86 carries the post-translational modification Phosphothreonine. The next 10 membrane-spanning stretches (helical) occupy residues Val-87 to Val-107, Val-116 to Met-136, Asn-159 to Ile-179, Leu-187 to Ile-207, Ile-311 to Phe-331, Ile-348 to Tyr-368, Ile-392 to Lys-412, Leu-435 to Met-455, Ile-470 to Ile-490, and Tyr-516 to Ala-536.

This sequence belongs to the major facilitator superfamily. Proton-dependent oligopeptide transporter (POT/PTR) (TC 2.A.17) family. As to expression, expressed in roots and flowers.

Its subcellular location is the membrane. This Arabidopsis thaliana (Mouse-ear cress) protein is Protein NRT1/ PTR FAMILY 5.4 (NPF5.4).